The sequence spans 338 residues: Phenylalanine--tRNA ligase alpha subunit (338 aa).

E253 contributes to the Mg(2+) binding site.

It belongs to the class-II aminoacyl-tRNA synthetase family. Phe-tRNA synthetase alpha subunit type 1 subfamily. As to quaternary structure, tetramer of two alpha and two beta subunits. Mg(2+) is required as a cofactor.

The protein resides in the cytoplasm. The catalysed reaction is tRNA(Phe) + L-phenylalanine + ATP = L-phenylalanyl-tRNA(Phe) + AMP + diphosphate + H(+). The chain is Phenylalanine--tRNA ligase alpha subunit from Syntrophotalea carbinolica (strain DSM 2380 / NBRC 103641 / GraBd1) (Pelobacter carbinolicus).